Here is a 367-residue protein sequence, read N- to C-terminus: Heme A synthase (367 aa).

The next 5 membrane-spanning stretches (helical) occupy residues 26-46, 111-131, 139-159, 174-194, and 212-232; these read IRGWLAVVLFALFALVIVGGA, LLARSIGVIFALPLLFFWLTG, LPLLGILALGGFQGFIGWWMV, LATHLVIACLIFAACMWIYRG, and AGIIAAMSLFQIYLGALVAGL. Position 274 (H274) interacts with heme. 3 helical membrane-spanning segments follow: residues 276–296, 305–325, and 327–347; these read AGAYLLFALAFAHMVVSLRAA, SVLLFVLLTVQAAIGITTLLL, and VPIVWGVLHQAGALVVLGFAI. Residue H335 participates in heme binding.

It belongs to the COX15/CtaA family. Type 2 subfamily. In terms of assembly, interacts with CtaB. Requires heme b as cofactor.

The protein resides in the cell membrane. The catalysed reaction is Fe(II)-heme o + 2 A + H2O = Fe(II)-heme a + 2 AH2. It participates in porphyrin-containing compound metabolism; heme A biosynthesis; heme A from heme O: step 1/1. Functionally, catalyzes the conversion of heme O to heme A by two successive hydroxylations of the methyl group at C8. The first hydroxylation forms heme I, the second hydroxylation results in an unstable dihydroxymethyl group, which spontaneously dehydrates, resulting in the formyl group of heme A. This chain is Heme A synthase, found in Sinorhizobium fredii (strain NBRC 101917 / NGR234).